The following is a 375-amino-acid chain: Homoserine O-succinyltransferase (375 aa).

Positions 48–358 (NAVLVCHALS…DAGHDSFLLD (311 aa)) constitute an AB hydrolase-1 domain. The active-site Nucleophile is S154. Residue R224 participates in substrate binding. Catalysis depends on residues D319 and H352. D353 provides a ligand contact to substrate.

Belongs to the AB hydrolase superfamily. MetX family. Homodimer.

It localises to the cytoplasm. The catalysed reaction is L-homoserine + succinyl-CoA = O-succinyl-L-homoserine + CoA. It functions in the pathway amino-acid biosynthesis; L-methionine biosynthesis via de novo pathway; O-succinyl-L-homoserine from L-homoserine: step 1/1. Functionally, transfers a succinyl group from succinyl-CoA to L-homoserine, forming succinyl-L-homoserine. This chain is Homoserine O-succinyltransferase, found in Aromatoleum aromaticum (strain DSM 19018 / LMG 30748 / EbN1) (Azoarcus sp. (strain EbN1)).